We begin with the raw amino-acid sequence, 701 residues long: Polyribonucleotide nucleotidyltransferase (701 aa).

Aspartate 487 and aspartate 493 together coordinate Mg(2+). Positions 554-613 (PTMIAMKIDTDKIRDVIGKGGATIRAICEETKASIDIEDDGSIKIFGETKEAAEAARQRV) constitute a KH domain. An S1 motif domain is found at 623-691 (GKIYVGKVER…NRGRIKLSIK (69 aa)).

This sequence belongs to the polyribonucleotide nucleotidyltransferase family. In terms of assembly, component of the RNA degradosome, which is a multiprotein complex involved in RNA processing and mRNA degradation. The cofactor is Mg(2+).

It localises to the cytoplasm. The enzyme catalyses RNA(n+1) + phosphate = RNA(n) + a ribonucleoside 5'-diphosphate. Involved in mRNA degradation. Catalyzes the phosphorolysis of single-stranded polyribonucleotides processively in the 3'- to 5'-direction. This chain is Polyribonucleotide nucleotidyltransferase, found in Pseudomonas fluorescens (strain SBW25).